The following is a 1256-amino-acid chain: Bifunctional autolysin (1256 aa).

The signal sequence occupies residues 1-29 (MAKKFNYKLPSMVALTLVGSAVTAHQVQA). Residues 103–138 (GDTRANQSATTNNTQPVAKSTSTTAPKTNTNVTNAG) show a composition bias toward polar residues. Disordered stretches follow at residues 103-151 (GDTR…NSEN), 173-219 (AAAP…KYKP), and 419-440 (TQST…PSTG). Low complexity-rich tracts occupy residues 173–196 (AAAP…KVTT) and 421–439 (STTT…KPST). Residues 199–775 (ASAQPRSVAA…AVAQPKTAVK (577 aa)) form an N-acetylmuramoyl-L-alanine amidase region. 7 consecutive GW domains span residues 443-517 (TVAA…YNTA), 519-593 (SPVN…DTAK), 612-686 (TVSS…YNNA), 688-762 (SPVN…VPAA), 784-859 (TTQT…VQNL), 861-936 (KEVK…APTA), and 943-1017 (AAKD…KELI). The tract at residues 776 to 1256 (AYTVTKPQTT…GKYFDIPQYK (481 aa)) is endo-beta-N-acetylglucosaminidase.

This sequence in the N-terminal section; belongs to the N-acetylmuramoyl-L-alanine amidase 2 family. It in the C-terminal section; belongs to the glycosyl hydrolase 73 family. In terms of assembly, oligomer; forms a ring structure at the cell surface which is important for efficient partitioning of daughter cells after cell division. Post-translationally, undergoes proteolytic processing to generate the two extracellular lytic enzymes, probably at the septal region on the cell surface.

The protein localises to the secreted. The catalysed reaction is Hydrolyzes the link between N-acetylmuramoyl residues and L-amino acid residues in certain cell-wall glycopeptides.. It carries out the reaction an N(4)-(oligosaccharide-(1-&gt;3)-[oligosaccharide-(1-&gt;6)]-beta-D-Man-(1-&gt;4)-beta-D-GlcNAc-(1-&gt;4)-alpha-D-GlcNAc)-L-asparaginyl-[protein] + H2O = an oligosaccharide-(1-&gt;3)-[oligosaccharide-(1-&gt;6)]-beta-D-Man-(1-&gt;4)-D-GlcNAc + N(4)-(N-acetyl-beta-D-glucosaminyl)-L-asparaginyl-[protein]. Endohydrolysis of the di-N-acetylchitobiosyl unit in high-mannose glycopeptides and glycoproteins containing the -[(Man)5(GlcNAc)2]-Asn structure. One N-acetyl-D-glucosamine residue remains attached to the protein; the rest of the oligosaccharide is released intact. Cleaves the peptidoglycan connecting the daughter cells at the end of the cell division cycle, resulting in the separation of the two newly divided cells. Acts as an autolysin in penicillin-induced lysis. The polypeptide is Bifunctional autolysin (atl) (Staphylococcus aureus (strain MW2)).